Here is a 465-residue protein sequence, read N- to C-terminus: UDP-N-acetylmuramate--L-alanine ligase (465 aa).

114-120 (GTHGKTT) contributes to the ATP binding site.

Belongs to the MurCDEF family.

Its subcellular location is the cytoplasm. It catalyses the reaction UDP-N-acetyl-alpha-D-muramate + L-alanine + ATP = UDP-N-acetyl-alpha-D-muramoyl-L-alanine + ADP + phosphate + H(+). Its pathway is cell wall biogenesis; peptidoglycan biosynthesis. Functionally, cell wall formation. The chain is UDP-N-acetylmuramate--L-alanine ligase from Chelativorans sp. (strain BNC1).